The sequence spans 217 residues: MIYMASGTHYESWSALPLFDRVASPDHAKDFVPDLNDYESPTFEVDLLSENYDYDNFLTYSLPTVDPTKTLLHEEPLCFEGDFTNPAIDHYITTSSGLLDAVPSQLIALPSFTQPSKCPFPNCKSTTIFESGRDFRRHYRQHFKRFFCRYPDCSQSTQDIMEVGTKGFATRKDRARHESKHKPTVRCPWHDQEGQQCLRVFSRVDNMRDHYRRIHKC.

A C2H2-type zinc finger spans residues 185 to 215; sequence VRCPWHDQEGQQCLRVFSRVDNMRDHYRRIH.

It is found in the nucleus. Its function is as follows. Transcriptional activator of part of the core trichothecene biosynthesis cluster. The protein is Trichothecene biosynthesis transcription regulator TRI6 of Fusarium sporotrichioides.